Reading from the N-terminus, the 168-residue chain is Cytochrome c-type biogenesis protein CcmE (168 aa).

Topologically, residues 1–23 (MTTAPSGLPGTPLPPARRRERPR) are cytoplasmic. The helical; Signal-anchor for type II membrane protein transmembrane segment at 24-44 (WPLLVAGAAVLGLIGYMVLGN) threads the bilayer. Residues 45–168 (ANSNLVYYVL…KILNDQSTKP (124 aa)) lie on the Extracellular side of the membrane. Heme-binding residues include histidine 137 and tyrosine 141. The tract at residues 145–168 (DSKGEGQYSQDDLKKILNDQSTKP) is disordered.

It belongs to the CcmE/CycJ family.

Its subcellular location is the cell membrane. Its function is as follows. Heme chaperone required for the biogenesis of c-type cytochromes. Transiently binds heme delivered by CcmC and transfers the heme to apo-cytochromes in a process facilitated by CcmF and CcmH. The chain is Cytochrome c-type biogenesis protein CcmE from Deinococcus radiodurans (strain ATCC 13939 / DSM 20539 / JCM 16871 / CCUG 27074 / LMG 4051 / NBRC 15346 / NCIMB 9279 / VKM B-1422 / R1).